A 328-amino-acid chain; its full sequence is DNA-directed RNA polymerase subunit alpha (328 aa).

The tract at residues 1 to 232 (MSTQGFLKPR…DQISVFAALE (232 aa)) is alpha N-terminal domain (alpha-NTD). The segment at 248–328 (IDPVLLRPVD…NWPPLGLERP (81 aa)) is alpha C-terminal domain (alpha-CTD).

It belongs to the RNA polymerase alpha chain family. As to quaternary structure, homodimer. The RNAP catalytic core consists of 2 alpha, 1 beta, 1 beta' and 1 omega subunit. When a sigma factor is associated with the core the holoenzyme is formed, which can initiate transcription.

The catalysed reaction is RNA(n) + a ribonucleoside 5'-triphosphate = RNA(n+1) + diphosphate. In terms of biological role, DNA-dependent RNA polymerase catalyzes the transcription of DNA into RNA using the four ribonucleoside triphosphates as substrates. The chain is DNA-directed RNA polymerase subunit alpha from Bordetella bronchiseptica (strain ATCC BAA-588 / NCTC 13252 / RB50) (Alcaligenes bronchisepticus).